A 372-amino-acid polypeptide reads, in one-letter code: 7-methylxanthosine synthase 1 (372 aa).

Residue Tyr-18 coordinates S-adenosyl-L-homocysteine. Xanthosine contacts are provided by Asn-21 and Asn-25. Residues Cys-62, Asn-67, Asp-101, Leu-102, Ser-140, Phe-141, and Cys-157 each coordinate S-adenosyl-L-homocysteine. Tyr-158 lines the xanthosine pocket. Cys-159 serves as a coordination point for S-adenosyl-L-homocysteine. 2 residues coordinate xanthosine: Gln-161 and Trp-162. Mg(2+) contacts are provided by Asn-179, Asp-261, Phe-263, and Asn-264. Residues Ser-316, Tyr-321, and Tyr-356 each coordinate xanthosine.

This sequence belongs to the methyltransferase superfamily. Type-7 methyltransferase family. It depends on Mg(2+) as a cofactor. As to expression, expressed in stems, young leaves, floral buds, developing endosperm and immature fruits (grains). Detected in roots and old leaves, but not in mature fruits.

It catalyses the reaction xanthosine + S-adenosyl-L-methionine = 7-methylxanthosine + S-adenosyl-L-homocysteine. Its pathway is alkaloid biosynthesis. Its function is as follows. Involved in the biosynthesis of caffeine. Specific for xanthosine and could not use xanthosine 5'-monophosphate (XMP) as substrate. Catalyzes the 7-N-methylation activity of xanthosine, but does not have 1-N- or 3-N-methylation activity. The chain is 7-methylxanthosine synthase 1 from Coffea arabica (Arabian coffee).